Reading from the N-terminus, the 415-residue chain is Serine hydroxymethyltransferase (415 aa).

Residues leucine 121 and 125–127 (GHL) contribute to the (6S)-5,6,7,8-tetrahydrofolate site. Lysine 230 is subject to N6-(pyridoxal phosphate)lysine. Residues glutamate 246 and 354 to 356 (SPF) contribute to the (6S)-5,6,7,8-tetrahydrofolate site.

It belongs to the SHMT family. Homodimer. Pyridoxal 5'-phosphate serves as cofactor.

The protein localises to the cytoplasm. The enzyme catalyses (6R)-5,10-methylene-5,6,7,8-tetrahydrofolate + glycine + H2O = (6S)-5,6,7,8-tetrahydrofolate + L-serine. It functions in the pathway one-carbon metabolism; tetrahydrofolate interconversion. Its pathway is amino-acid biosynthesis; glycine biosynthesis; glycine from L-serine: step 1/1. In terms of biological role, catalyzes the reversible interconversion of serine and glycine with tetrahydrofolate (THF) serving as the one-carbon carrier. This reaction serves as the major source of one-carbon groups required for the biosynthesis of purines, thymidylate, methionine, and other important biomolecules. Also exhibits THF-independent aldolase activity toward beta-hydroxyamino acids, producing glycine and aldehydes, via a retro-aldol mechanism. The polypeptide is Serine hydroxymethyltransferase (Bdellovibrio bacteriovorus (strain ATCC 15356 / DSM 50701 / NCIMB 9529 / HD100)).